The sequence spans 159 residues: 6,7-dimethyl-8-ribityllumazine synthase (159 aa).

5-amino-6-(D-ribitylamino)uracil-binding positions include W27, 62-64 (SWE), and 86-88 (VLI). 91 to 92 (ST) is a (2S)-2-hydroxy-3-oxobutyl phosphate binding site. H94 acts as the Proton donor in catalysis. 5-amino-6-(D-ribitylamino)uracil is bound at residue L119. R133 serves as a coordination point for (2S)-2-hydroxy-3-oxobutyl phosphate.

In terms of assembly, homopentamer.

The catalysed reaction is (2S)-2-hydroxy-3-oxobutyl phosphate + 5-amino-6-(D-ribitylamino)uracil = 6,7-dimethyl-8-(1-D-ribityl)lumazine + phosphate + 2 H2O + H(+). Its pathway is cofactor biosynthesis; riboflavin biosynthesis; riboflavin from 2-hydroxy-3-oxobutyl phosphate and 5-amino-6-(D-ribitylamino)uracil: step 1/2. Competitively inhibited by riboflavin (Ki of 17 uM). Catalyzes the formation of 6,7-dimethyl-8-ribityllumazine by condensation of 5-amino-6-(D-ribitylamino)uracil with 3,4-dihydroxy-2-butanone 4-phosphate. This is the penultimate step in the biosynthesis of riboflavin. Also binds riboflavin with an unexpected high affinity. This chain is 6,7-dimethyl-8-ribityllumazine synthase (rib4), found in Schizosaccharomyces pombe (strain 972 / ATCC 24843) (Fission yeast).